The following is a 462-amino-acid chain: NAD-capped RNA hydrolase NUDT12 (462 aa).

ANK repeat units follow at residues 11-40 (EIVT…SLLN), 45-74 (NGWT…DRSI), and 78-98 (SRQT…ANLL). Lysine 185 is modified (N6-succinyllysine). Zn(2+) contacts are provided by cysteine 284 and cysteine 287. Position 292 is an N6-succinyllysine (lysine 292). Positions 302 and 307 each coordinate Zn(2+). Substrate-binding positions include tyrosine 318, 354–356 (AGF), glutamate 370, glutamate 374, and glutamate 415. One can recognise a Nudix hydrolase domain in the interval 319 to 453 (PRVDPVVIMQ…SRAIAHQLIK (135 aa)). Mg(2+) contacts are provided by alanine 354, glutamate 370, glutamate 374, and glutamate 415. The short motif at 355–376 (GFIEPGETIEDAVRREVEEESG) is the Nudix box element. The short motif at 460–462 (PNL) is the Microbody targeting signal element.

The protein belongs to the Nudix hydrolase family. NudC subfamily. Homodimer. Homodimerization is essential for its catalytic activity and protein stability. Interacts (via ANK repeats) with BLMH. Requires Mg(2+) as cofactor. Zn(2+) serves as cofactor.

It is found in the cytoplasm. The protein resides in the peroxisome. The protein localises to the cytoplasmic granule. The enzyme catalyses a 5'-end NAD(+)-phospho-ribonucleoside in mRNA + H2O = a 5'-end phospho-adenosine-phospho-ribonucleoside in mRNA + beta-nicotinamide D-ribonucleotide + 2 H(+). It catalyses the reaction NAD(+) + H2O = beta-nicotinamide D-ribonucleotide + AMP + 2 H(+). It carries out the reaction NADH + H2O = reduced beta-nicotinamide D-ribonucleotide + AMP + 2 H(+). The catalysed reaction is NADPH + H2O = reduced beta-nicotinamide D-ribonucleotide + adenosine 2',5'-bisphosphate + 2 H(+). In terms of biological role, mRNA decapping enzyme that specifically removes the nicotinamide adenine dinucleotide (NAD) cap from a subset of mRNAs by hydrolyzing the diphosphate linkage to produce nicotinamide mononucleotide (NMN) and 5' monophosphate mRNA. The NAD-cap is present at the 5'-end of some RNAs; in contrast to the canonical N7 methylguanosine (m7G) cap, the NAD cap promotes mRNA decay. Preferentially acts on NAD-capped transcripts in response to nutrient stress. Also acts on free nicotinamide adenine dinucleotide molecules: hydrolyzes NAD(H) into NMN(H) and AMP, and NADPH into NMNH and 2',5'-ADP. May act to regulate the concentration of peroxisomal nicotinamide nucleotide cofactors required for oxidative metabolism in this organelle. Regulates the levels of circadian clock components PER1, PER2, PER3 and CRY2 in the liver. This chain is NAD-capped RNA hydrolase NUDT12, found in Macaca fascicularis (Crab-eating macaque).